The primary structure comprises 365 residues: GTPase Obg (365 aa).

Positions 1–159 constitute an Obg domain; the sequence is MKFIDEARIE…RMLKLELKVL (159 aa). The 175-residue stretch at 160–334 folds into the OBG-type G domain; sequence ADVGLLGMPN…LIYAIKDHLQ (175 aa). Residues 166–173, 191–195, 213–216, 284–287, and 315–317 contribute to the GTP site; these read GMPNAGKS, FTTLH, DIPG, NKLD, and SAL. Mg(2+)-binding residues include S173 and T193.

Belongs to the TRAFAC class OBG-HflX-like GTPase superfamily. OBG GTPase family. In terms of assembly, monomer. Mg(2+) serves as cofactor.

The protein localises to the cytoplasm. Functionally, an essential GTPase which binds GTP, GDP and possibly (p)ppGpp with moderate affinity, with high nucleotide exchange rates and a fairly low GTP hydrolysis rate. Plays a role in control of the cell cycle, stress response, ribosome biogenesis and in those bacteria that undergo differentiation, in morphogenesis control. The sequence is that of GTPase Obg from Cupriavidus necator (strain ATCC 17699 / DSM 428 / KCTC 22496 / NCIMB 10442 / H16 / Stanier 337) (Ralstonia eutropha).